The primary structure comprises 193 residues: Deoxycytidylate deaminase (193 aa).

Residues 1 to 171 (MKASTVLQIA…DILRNAGIEV (171 aa)) enclose the CMP/dCMP-type deaminase domain. Residues Cys-19, Cys-49, His-94, Glu-102, and His-104 each contribute to the Zn(2+) site. Glu-106 (proton donor) is an active-site residue. Cys-132 and Cys-135 together coordinate Zn(2+). Tyr-153 contributes to the substrate binding site.

Belongs to the cytidine and deoxycytidylate deaminase family. As to quaternary structure, homohexamer. Zn(2+) is required as a cofactor.

The enzyme catalyses dCMP + H2O + H(+) = dUMP + NH4(+). Its activity is regulated as follows. Allosteric enzyme whose activity is greatly influenced by the end products of its metabolic pathway, dCTP and dTTP. In terms of biological role, supplies the nucleotide substrate for thymidylate synthetase. This chain is Deoxycytidylate deaminase (CD), found in Escherichia coli (Bacteriophage T4).